Here is a 955-residue protein sequence, read N- to C-terminus: Kinesin-like protein K39 (955 aa).

Positions 12–392 constitute a Kinesin motor domain; that stretch reads RVKVSVRVRP…LRYASRARDI (381 aa). 122-129 serves as a coordination point for ATP; it reads GQTGSGKT. Positions 426 to 955 form a coiled coil; that stretch reads PAYVSELKKK…EERAAELASQ (530 aa). Disordered stretches follow at residues 682-712 and 725-955; these read ELDA…RESE and TAAA…LASQ. 7 repeat units span residues 704-742, 743-781, 782-820, 821-859, 860-898, 899-937, and 938-955. Positions 704–955 are 7 X 39 AA approximate tandem repeats; the sequence is LEQQLRESEE…EERAAELASQ (252 aa). 5 stretches are compositionally biased toward basic and acidic residues: residues 785-794, 824-833, 863-872, 902-911, and 941-955; these read QLRDSEERAA, QLRESEERAA, and QLRD…LASQ.

Belongs to the TRAFAC class myosin-kinesin ATPase superfamily. Kinesin family.

Its subcellular location is the cytoplasm. The protein resides in the cytoskeleton. This Leishmania chagasi protein is Kinesin-like protein K39 (KIN).